We begin with the raw amino-acid sequence, 168 residues long: Dihydrofolate reductase (168 aa).

One can recognise a DHFR domain in the interval 1-164; that stretch reads MIIGIWAEDE…YTFTIKKYEK (164 aa). Residue 5-7 coordinates substrate; that stretch reads IWA. NADP(+) is bound by residues 6-7 and 14-19; these read WA and IGEADK. E27 provides a ligand contact to substrate. 43-46 provides a ligand contact to NADP(+); sequence GRKT. R58 serves as a coordination point for substrate. Residues 63–66 and 99–104 each bind NADP(+); these read LTRD and TGGAEI. T118 is a substrate binding site.

The protein belongs to the dihydrofolate reductase family.

The catalysed reaction is (6S)-5,6,7,8-tetrahydrofolate + NADP(+) = 7,8-dihydrofolate + NADPH + H(+). The protein operates within cofactor biosynthesis; tetrahydrofolate biosynthesis; 5,6,7,8-tetrahydrofolate from 7,8-dihydrofolate: step 1/1. Its function is as follows. Key enzyme in folate metabolism. Catalyzes an essential reaction for de novo glycine and purine synthesis, and for DNA precursor synthesis. This Lactococcus lactis subsp. lactis (strain IL1403) (Streptococcus lactis) protein is Dihydrofolate reductase (folA).